A 995-amino-acid polypeptide reads, in one-letter code: MGPHSWLPLFMQLALLGPQWALHFYKVKVFVVPHSHMDVGWLHTVQESMQVYVPDVYNSVVEALTRGKRRRFIAVEQEYFRLWWDGFASAKRKQQVRQLLAEQRLEFVLGGQVMHDEAVTHFDDQILQLTEGHGFLYETFGIRPQFSWQVDPFGASATTPTLLALAGFNGHIISRIDYDLKDTMQHTQGLQFVWRGSRSLEARQEIFTHVLDQYSYCSDGFMWNGSPRFPDRPFDMDYSAVEMPVSQDSMNHYVLNLVDNVNKRAAWFRTQHVLWPWGCDRQFFNASQQFANMDRLMDHINKHTPELGISMQYATLAEYFQAVFAQDVSWQVRDHRDFLPYSSAPEQTWTGFYTSQSGLKRLARRASALLYAGESLFTRYMLSAAHRFLDPAWALTQLQQLRWAVSEVQHHDGITGTHILAVRDMFVEHLTTGMAGVRKLMDSIAQDMPLTHSGPEPGGHVAMVYNPLAWTVTTVITLTVSFPEVSVTDESGRPVLAQVQDSKETPSAYDLHVLTTIPGLSYQHYIIKPIRKAREDSQEAAATVPSTIQFGLKLRRQDGQVGRNLVPVKNSCYTVFLDKDTNLMHSIWERQSNRTVRMSQEFLAYRSVYGYEEAVTSDNYLFTPNGTAEPAWAAVRMEVVEGQLLSEIRQYFYRQANDSDHTYAIYSRLAHGPQDSAGELLCHRIEQEYRVGPLELNHEVVLRTSTSLNTGLVLYSDNNGYQMQRRTYRHDRNNSVSLNYYPMAQSAFIQDGGSRLVLLSEQAHGVSSQGNGQVEVMLHRRLWNKLEWTLQYNLTHDVTSVVRPVLWLLLGPRTLTTGLRQRSGLELQHRPVVLFRELGGTVQNGPGPRKQEPVTLPPSLHLQILSIPGWKYSSNHTVHLKNLQKGHYRRAKADFRRVLLRLHHLYEAGEHQALSRPVTLNLQSVLRGLGSVVAVEERSLTGTWDVNSLHRWSWKTEDGHHHRGSSRRPLPPLRGPNVTIHPKEIRTFFIHFQEQ.

A signal peptide spans 1–21 (MGPHSWLPLFMQLALLGPQWA). Residues His-36, Asp-38, and Asp-151 each coordinate Zn(2+). The active-site Nucleophile is Asp-151. Residue Asn-285 is glycosylated (N-linked (GlcNAc...) asparagine). His-411 contributes to the Zn(2+) binding site. 7 N-linked (GlcNAc...) asparagine glycosylation sites follow: Asn-593, Asn-625, Asn-657, Asn-733, Asn-793, Asn-875, and Asn-977. A disordered region spans residues 956–977 (TEDGHHHRGSSRRPLPPLRGPN).

Belongs to the glycosyl hydrolase 38 family. Requires Zn(2+) as cofactor. Processed into a 27 kDa fragment localized on the equatorial segment and the apical rim of the head of mature sperm. Specific to the caput and corpus of the epididymis.

It is found in the secreted. It carries out the reaction Hydrolysis of terminal, non-reducing alpha-D-mannose residues in alpha-D-mannosides.. In terms of biological role, can digest both p-nitro-phenyl-alpha-D-mannoside and high mannose oligosaccharide (Man(8)-GlcNAc(2)). May be involved in sperm maturation. Has a possible role in specific sperm-egg interaction since sperm surface mannosidase acts like a receptor for mannose-containing oligosaccharides located on the zona pellucida. This Sus scrofa (Pig) protein is Epididymis-specific alpha-mannosidase (MAN2B2).